The chain runs to 374 residues: Alginate lyase (374 aa).

Positions 1 to 23 (MHKTRLALSCLLGSLLLSGAVHA) are cleaved as a signal peptide. Residues 62-63 (SK), 135-136 (HT), and Tyr253 contribute to the substrate site.

It belongs to the polysaccharide lyase 5 family.

It is found in the periplasm. It carries out the reaction Eliminative cleavage of alginate to give oligosaccharides with 4-deoxy-alpha-L-erythro-hex-4-enuronosyl groups at their non-reducing ends and beta-D-mannuronate at their reducing end.. In terms of biological role, catalyzes the depolymerization of alginate by cleaving the beta-1,4 glycosidic bond between two adjacent sugar residues via a beta-elimination mechanism. May serve to degrade mislocalized alginate that is trapped in the periplasmic space. The sequence is that of Alginate lyase from Azotobacter vinelandii (strain DJ / ATCC BAA-1303).